The chain runs to 104 residues: UPF0212 protein PH1312 (104 aa).

This sequence belongs to the UPF0212 family.

The polypeptide is UPF0212 protein PH1312 (Pyrococcus horikoshii (strain ATCC 700860 / DSM 12428 / JCM 9974 / NBRC 100139 / OT-3)).